The sequence spans 286 residues: UDP-3-O-acyl-N-acetylglucosamine deacetylase (286 aa).

The Zn(2+) site is built by histidine 79, histidine 237, and aspartate 241. Catalysis depends on histidine 264, which acts as the Proton donor.

This sequence belongs to the LpxC family. The cofactor is Zn(2+).

It carries out the reaction a UDP-3-O-[(3R)-3-hydroxyacyl]-N-acetyl-alpha-D-glucosamine + H2O = a UDP-3-O-[(3R)-3-hydroxyacyl]-alpha-D-glucosamine + acetate. The protein operates within glycolipid biosynthesis; lipid IV(A) biosynthesis; lipid IV(A) from (3R)-3-hydroxytetradecanoyl-[acyl-carrier-protein] and UDP-N-acetyl-alpha-D-glucosamine: step 2/6. In terms of biological role, catalyzes the hydrolysis of UDP-3-O-myristoyl-N-acetylglucosamine to form UDP-3-O-myristoylglucosamine and acetate, the committed step in lipid A biosynthesis. This is UDP-3-O-acyl-N-acetylglucosamine deacetylase from Chlamydia trachomatis serovar L2 (strain ATCC VR-902B / DSM 19102 / 434/Bu).